Consider the following 238-residue polypeptide: Thrombin-like enzyme gyroxin B2.1 (238 aa).

Residues 1 to 229 form the Peptidase S1 domain; the sequence is VIGGDECNIN…HLDWIQNIIA (229 aa). 6 disulfides stabilise this stretch: Cys-7-Cys-141, Cys-28-Cys-44, Cys-78-Cys-236, Cys-120-Cys-190, Cys-152-Cys-169, and Cys-180-Cys-205. His-43 (charge relay system) is an active-site residue. A glycan (N-linked (GlcNAc...) asparagine) is linked at Asn-81. Asp-88 serves as the catalytic Charge relay system. Ser-184 serves as the catalytic Charge relay system.

Belongs to the peptidase S1 family. Snake venom subfamily. Monomer. In terms of tissue distribution, expressed by the venom gland.

It is found in the secreted. Its function is as follows. Thrombin-like snake venom serine protease. Displays a specificity similar to trypsin. Releases only fibrinopeptide A in the conversion of fibrinogen (FGA) to fibrin. Shows coagulant, esterase and amidase activities. Reversibly increases the permeability of the blood brain barrier (BBB) in mice. Induces the barrel rotation syndrome in mice, which is manifested by gyroxin-like, rapid rolling motions. This syndrome may be due to its effect on BBB permeability, and certainly also to other actions affecting endogenous substrates present in the endothelium, nervous tissues or blood. This Crotalus durissus terrificus (South American rattlesnake) protein is Thrombin-like enzyme gyroxin B2.1.